The primary structure comprises 306 residues: Ornithine carbamoyltransferase (306 aa).

Residues 54–57 (STRT), Gln-81, Arg-105, and 132–135 (HPLQ) each bind carbamoyl phosphate. L-ornithine-binding positions include Asn-162, Asp-226, and 230–231 (SM). Residues 266 to 267 (CL) and Arg-294 each bind carbamoyl phosphate.

It belongs to the aspartate/ornithine carbamoyltransferase superfamily. OTCase family.

The protein localises to the cytoplasm. It catalyses the reaction carbamoyl phosphate + L-ornithine = L-citrulline + phosphate + H(+). Its pathway is amino-acid biosynthesis; L-arginine biosynthesis; L-arginine from L-ornithine and carbamoyl phosphate: step 1/3. Its function is as follows. Reversibly catalyzes the transfer of the carbamoyl group from carbamoyl phosphate (CP) to the N(epsilon) atom of ornithine (ORN) to produce L-citrulline. The protein is Ornithine carbamoyltransferase of Sulfolobus acidocaldarius (strain ATCC 33909 / DSM 639 / JCM 8929 / NBRC 15157 / NCIMB 11770).